Consider the following 389-residue polypeptide: Protein DDI1 homolog 1 (389 aa).

The segment at 109-132 (SSSSAQSAQRTRRVEQDDEGEKSM) is disordered. Residue Asp261 is part of the active site.

Belongs to the DDI1 family. Expressed in most tissues.

The protein resides in the cytoplasm. Its subcellular location is the nucleus. Functionally, aspartic protease. Required for the cleavage and activation of transcription factors such as isoform a of the transcription factor skn-1, which in turn regulates the expression of proteasomal subunits such as rpt-3. Plays a key role in the degradation of the potassium channel slo-1, perhaps acting directly, in cleaving slo-1 upstream of the ER-associated degradation pathway (ERAD), and also indirectly, via activation of the transcription factor skn-1, which mediates proteasomal homeostasis. This Caenorhabditis elegans protein is Protein DDI1 homolog 1.